Reading from the N-terminus, the 327-residue chain is Phenylalanine--tRNA ligase alpha subunit (327 aa).

Residue Glu-252 participates in Mg(2+) binding.

The protein belongs to the class-II aminoacyl-tRNA synthetase family. Phe-tRNA synthetase alpha subunit type 1 subfamily. As to quaternary structure, tetramer of two alpha and two beta subunits. The cofactor is Mg(2+).

It localises to the cytoplasm. The enzyme catalyses tRNA(Phe) + L-phenylalanine + ATP = L-phenylalanyl-tRNA(Phe) + AMP + diphosphate + H(+). The polypeptide is Phenylalanine--tRNA ligase alpha subunit (Escherichia coli O127:H6 (strain E2348/69 / EPEC)).